Consider the following 213-residue polypeptide: Redox-sensing transcriptional repressor Rex (213 aa).

Positions 17-56 (LYYRIFKRFHSENIEKASSKQIAEAIGIDSATVRRDFSYF) form a DNA-binding region, H-T-H motif. 91-96 (GVGNIG) provides a ligand contact to NAD(+).

This sequence belongs to the transcriptional regulatory Rex family. Homodimer.

The protein resides in the cytoplasm. Modulates transcription in response to changes in cellular NADH/NAD(+) redox state. In Streptococcus mutans serotype c (strain ATCC 700610 / UA159), this protein is Redox-sensing transcriptional repressor Rex.